The following is a 276-amino-acid chain: Pantothenate synthetase (276 aa).

27–34 (MGALHKGH) is an ATP binding site. Catalysis depends on H34, which acts as the Proton donor. Q58 is a (R)-pantoate binding site. Q58 contacts beta-alanine. 147-150 (GKKD) is an ATP binding site. Q153 contacts (R)-pantoate. Residues V176 and 184 to 187 (LSSR) contribute to the ATP site.

The protein belongs to the pantothenate synthetase family. Homodimer.

It localises to the cytoplasm. The catalysed reaction is (R)-pantoate + beta-alanine + ATP = (R)-pantothenate + AMP + diphosphate + H(+). The protein operates within cofactor biosynthesis; (R)-pantothenate biosynthesis; (R)-pantothenate from (R)-pantoate and beta-alanine: step 1/1. Its function is as follows. Catalyzes the condensation of pantoate with beta-alanine in an ATP-dependent reaction via a pantoyl-adenylate intermediate. The protein is Pantothenate synthetase of Helicobacter pylori (strain Shi470).